Reading from the N-terminus, the 2523-residue chain is MSFVVMPPEINSLLIYTGAGPGPLLAAAAAWDELAAELGSAAAAFGSVTSGLVGGIWQGPSSVAMAAAAAPYAGWLSAAAASAESAAGQARAVVGVFEAALAETVDPFVIAANRSRLVSLALSNLFGQNTPAIAAAEFDYELMWAQDVAAMLGYHTGASAAAEALAPFGSPLASLAAAAEPAKSLAVNLGLANVGLFNAGSGNVGSYNVGAGNVGSYNVGGGNIGGNNVGLGNVGWGNFGLGNSGLTPGLMGLGNIGFGNAGSYNFGLANMGVGNIGFANTGSGNFGIGLTGDNLTGFGGFNTGSGNVGLFNSGTGNVGFFNSGTGNWGVFNSGSYNTGIGNSGIASTGLFNAGGFNTGVVNAGSYNTGSFNAGEANTGGFNPGSVNTGWLNTGDINTGVANSGDVNTGAFISGNYSNGVLWRGDYQGLLGFSSGANVLPVIPLSLDINGGVGAITIEPIHILPDIPININETLYLGPLVVPPINVPAISLGVGIPNISIGPIKINPITLWPAQNFNQTITLAWPVSSITIPQIQQVALSPSPIPTTLIGPIHINTGFSIPVTFSYSTPALTLFPVGLSIPTGGPLTLTLGVTAGTEAFTIPGFSIPEQPLPLAINVIGHINALSTPAITIDNIPLNLHAIGGVGPVDIVGGNVPASPGFGNSTTAPSSGFFNTGAGGVSGFGNVGAHTSGWFNQSTQAMQVLPGTVSGYFNSGTLMSGIGNVGTQLSGMLSGGALGGNNFGLGNIGFDNVGFGNAGSSNFGLANMGIGNIGLANTGNGNIGIGLSGDNLTGFGGFNSGSENVGLFNSGTGNVGFFNSGTGNLGVFNSGSHNTGFFLTGNNINVLAPFTPGTLFTISEIPIDLQVIGGIGPIHVQPIDIPAFDIQITGGFIGIREFTLPEITIPAIPIHVTGTVGLEGFHVNPAFVLFGQTAMAEITADPVVLPDPFITIDHYGPPLGPPGAKFPSGSFYLSISDLQINGPIIGSYGGPGTIPGPFGATFNLSTSSLALFPAGLTVPDQTPVTVNLTGGLDSITLFPGGLAFPENPVVSLTNFSVGTGGFTVFPQGFTVDRIPVDLHTTLSIGPFPFRWDYIPPTPANGPIPAVPGGFGLTSGLFPFHFTLNGGIGPISIPTTTVVDALNPLLTVTGNLEVGPFTVPDIPIPAINFGLDGNVNVSFNAPATTLLSGLGITGSIDISGIQITNIQTQPAQLFMSVGQTLFLFDFRDGIELNPIVIPGSSIPITMAGLSIPLPTVSESIPLNFSFGSPASTVKSMILHEILPIDVSINLEDAVFIPATVLPAIPLNVDVTIPVGPINIPIITEPGSGNSTTTTSDPFSGLAVPGLGVGLLGLFDGSIANNLISGFNSAVGIVGPNVGLSNLGGGNVGLGNVGDFNLGAGNVGGFNVGGGNIGGNNVGLGNVGFGNVGLANSGLTPGLMGLGNIGFGNAGSYNFGLANMGVGNIGFANTGSGNFGIGLTGDNLTGFGGFNTGSGNVGLFNSGTGNVGFFNSGTGNWGVFNSGSYNTGIGNSGIASTGLFNAGGFNTGVVNAGSYNTGSFNAGQANTGGFNPGSVNTGWLNTGDINTGVANSGDVNTGAFISGNYSNGAFWRGDYQGLLGFSYRPAVLPQTPFLDLTLTGGLGSVVIPAIDIPAIRPEFSANVAIDSFTVPSIPIPQIDLAATTVSVGLGPITVPHLDIPRVPVTLNYLFGSQPGGPLKIGPITGLFNTPIGLTPLALSQIVIGASSSQGTITAFLANLPFSTPVVTIDEIPLLASITGHSEPVDIFPGGLTIPAMNPLSINLSGGTGAVTIPAITIGEIPFDLVAHSTLGPVHILIDLPAVPGFGNTTGAPSSGFFNSGAGGVSGFGNVGAMVSGGWNQAPSALLGGGSGVFNAGTLHSGVLNFGSGMSGLFNTSVLGLGAPALVSGLGSVGQQLSGLLASGTALHQGLVLNFGLADVGLGNVGLGNVGDFNLGAGNVGGFNVGGGNIGGNNVGLGNVGWGNFGLGNSGLTPGLMGLGNIGFGNAGSYNFGLANMGVGNIGFANTGSGNFGIGLTGDNLTGFGGFNTGSGNVGLFNSGTGNVGFFNSGTGNWGVFNSGSYNTGIGNSGIASTGLFNAGGFNTGVVNAGSYNTGSFNAGQANTGGFNPGSVNTGWLNTGDINTGVANSGDVNTGAFISGNYSNGAFWRGDYQGLLGFSYTSTIIPEFTVANIHASGGAGPIIVPSIQFPAIPLDLSATGHIGGFTIPPVSISPITVRIDPVFDLGPITVQDITIPALGLDPATGVTVGPIFSSGSIIDPFSLTLLGFINVNVPAIQTAPSEILPFTVLLSSLGVTHLTPEITIPGFHIPVDPIHVELPLSVTIGPFVSPEITIPQLPLGLALSGATPAFAFPLEITIDRIPVVLDVNALLGPINAGLVIPPVPGFGNTTAVPSSGFFNIGGGGGLSGFHNLGAGMSGVLNAISDPLLGSASGFANFGTQLSGILNRGADISGVYNTGALGLITSALVSGFGNVGQQLAGLIYTGTGP.

This sequence belongs to the mycobacterial PPE family.

Its function is as follows. Probably plays a role in host phagosome maturation arrest. This is an uncharacterized protein from Mycobacterium tuberculosis (strain ATCC 25618 / H37Rv).